A 447-amino-acid polypeptide reads, in one-letter code: Probable glycine dehydrogenase (decarboxylating) subunit 1 (447 aa).

Belongs to the GcvP family. N-terminal subunit subfamily. The glycine cleavage system is composed of four proteins: P, T, L and H. In this organism, the P 'protein' is a heterodimer of two subunits.

The enzyme catalyses N(6)-[(R)-lipoyl]-L-lysyl-[glycine-cleavage complex H protein] + glycine + H(+) = N(6)-[(R)-S(8)-aminomethyldihydrolipoyl]-L-lysyl-[glycine-cleavage complex H protein] + CO2. Its function is as follows. The glycine cleavage system catalyzes the degradation of glycine. The P protein binds the alpha-amino group of glycine through its pyridoxal phosphate cofactor; CO(2) is released and the remaining methylamine moiety is then transferred to the lipoamide cofactor of the H protein. The polypeptide is Probable glycine dehydrogenase (decarboxylating) subunit 1 (Bacillus cereus (strain G9842)).